The sequence spans 134 residues: Phosphoribosyl-ATP pyrophosphatase (134 aa).

This sequence belongs to the PRA-PH family.

It localises to the cytoplasm. It catalyses the reaction 1-(5-phospho-beta-D-ribosyl)-ATP + H2O = 1-(5-phospho-beta-D-ribosyl)-5'-AMP + diphosphate + H(+). The protein operates within amino-acid biosynthesis; L-histidine biosynthesis; L-histidine from 5-phospho-alpha-D-ribose 1-diphosphate: step 2/9. The chain is Phosphoribosyl-ATP pyrophosphatase from Verminephrobacter eiseniae (strain EF01-2).